We begin with the raw amino-acid sequence, 586 residues long: Aspartate--tRNA(Asp/Asn) ligase (586 aa).

L-aspartate is bound at residue glutamate 176. Residues 200 to 203 (QIFK) are aspartate. Arginine 222 is a binding site for L-aspartate. ATP contacts are provided by residues 222-224 (RDE) and glutamine 231. Position 449 (histidine 449) interacts with L-aspartate. An ATP-binding site is contributed by glutamate 483. Arginine 490 lines the L-aspartate pocket. Position 535–538 (535–538 (GIDR)) interacts with ATP.

Belongs to the class-II aminoacyl-tRNA synthetase family. Type 1 subfamily. As to quaternary structure, homodimer.

Its subcellular location is the cytoplasm. The catalysed reaction is tRNA(Asx) + L-aspartate + ATP = L-aspartyl-tRNA(Asx) + AMP + diphosphate. Aspartyl-tRNA synthetase with relaxed tRNA specificity since it is able to aspartylate not only its cognate tRNA(Asp) but also tRNA(Asn). Reaction proceeds in two steps: L-aspartate is first activated by ATP to form Asp-AMP and then transferred to the acceptor end of tRNA(Asp/Asn). The chain is Aspartate--tRNA(Asp/Asn) ligase from Brachyspira hyodysenteriae (strain ATCC 49526 / WA1).